The chain runs to 644 residues: Macrolide export ATP-binding/permease protein MacB (644 aa).

The ABC transporter domain maps to 4–242 (IECKNINRYF…SNVGRIREKA (239 aa)). Position 40 to 47 (40 to 47 (GQSGSGKS)) interacts with ATP. Transmembrane regions (helical) follow at residues 270–290 (LLTM…VALG), 524–544 (IALI…LVSV), 574–594 (LICV…SLVF), and 607–627 (AMSV…FGFM).

The protein belongs to the ABC transporter superfamily. Macrolide exporter (TC 3.A.1.122) family. In terms of assembly, homodimer.

It localises to the cell inner membrane. Functionally, non-canonical ABC transporter that contains transmembrane domains (TMD), which form a pore in the inner membrane, and an ATP-binding domain (NBD), which is responsible for energy generation. Confers resistance against macrolides. The sequence is that of Macrolide export ATP-binding/permease protein MacB from Neisseria meningitidis serogroup B (strain ATCC BAA-335 / MC58).